We begin with the raw amino-acid sequence, 455 residues long: MNNQFTWLHIGLGSFHRAHQAWYLHRLIASGDNRWRIAAGNIRNDAEQVVQALAAQGGRYVLETVSPEGEREYEEITSIQKLLPWQAGLQPLINEGANPQTKVIAFTVTEGGYYLNTRHRLETSNPDLQADLQGECKTIYGTLARILEKRMADNAGPLTLLNCDNVRHNGERFHDGMVEFLQLTGKQAVIDWMAANTTCPNTMVDRITPRPAADLPARIKAQAGIDDKAPVMGETFIQWVVENNFRDVRPNLEAVGVEMVESVIPYEEAKIRILNASHSCIAWAGTLIGQQYIHESTLTDVIYAIADRYVTEDVIPCLGDNGIDLPTYRDVVLKRFTNPYIQDTNQRVAADGFSKIPAMIAPTLQECYQRGVRPEATAMLPALFFVFMEQWHKGTLPYQYQDGILDAQAVHEMFEAQDPVAVFARDKALFGDLANNADFLALMREKVAAVYTLIN.

It belongs to the mannitol dehydrogenase family. In terms of assembly, monomer.

The enzyme catalyses D-arabinitol + NAD(+) = D-xylulose + NADH + H(+). It participates in carbohydrate metabolism; D-arabinitol metabolism. The polypeptide is D-arabinitol 4-dehydrogenase (dalD) (Klebsiella pneumoniae).